The sequence spans 129 residues: Keratin-associated protein 5-6 (129 aa).

6 tandem repeats follow at residues 28–31 (CCVP), 34–37 (CCKP), 40–43 (CCVP), 90–93 (CCKP), 109–112 (CCKP), and 119–122 (CCVP). The segment at 28–112 (CCVPICCCKP…SCCQSSCCKP (85 aa)) is 6 X 4 AA repeats of C-C-X-P.

This sequence belongs to the KRTAP type 5 family. In terms of assembly, interacts with hair keratins. In terms of tissue distribution, expressed in hair root and not in skin. Expressed also in liver and skeletal muscle.

Its function is as follows. In the hair cortex, hair keratin intermediate filaments are embedded in an interfilamentous matrix, consisting of hair keratin-associated protein (KRTAP), which are essential for the formation of a rigid and resistant hair shaft through their extensive disulfide bond cross-linking with abundant cysteine residues of hair keratins. The matrix proteins include the high-sulfur and high-glycine-tyrosine keratins. In Homo sapiens (Human), this protein is Keratin-associated protein 5-6 (KRTAP5-6).